The chain runs to 280 residues: DegV domain-containing protein Mb2440c (280 aa).

The DegV domain occupies 3 to 274 (VVVVTDTSCR…AGAVGVCVDV (272 aa)). Ser-89 serves as a coordination point for hexadecanoate.

Functionally, may bind long-chain fatty acids, such as palmitate, and may play a role in lipid transport or fatty acid metabolism. In Mycobacterium bovis (strain ATCC BAA-935 / AF2122/97), this protein is DegV domain-containing protein Mb2440c.